The chain runs to 449 residues: Probable aminotransferase TAT1 (449 aa).

Residues 1–12 (MNHNSNLVLPSH) show a composition bias toward polar residues. The tract at residues 1-20 (MNHNSNLVLPSHQTETQTQD) is disordered.

The protein belongs to the class-I pyridoxal-phosphate-dependent aminotransferase family. Requires pyridoxal 5'-phosphate as cofactor.

The polypeptide is Probable aminotransferase TAT1 (Arabidopsis thaliana (Mouse-ear cress)).